The following is a 483-amino-acid chain: Cysteine--tRNA ligase (483 aa).

C28 contributes to the Zn(2+) binding site. A 'HIGH' region motif is present at residues 30–40; the sequence is MTVYDYCHLGH. Zn(2+) contacts are provided by C212, H237, and E241. The short motif at 269-273 is the 'KMSKS' region element; sequence KMSKS. Residue K272 participates in ATP binding.

Belongs to the class-I aminoacyl-tRNA synthetase family. In terms of assembly, monomer. The cofactor is Zn(2+).

It is found in the cytoplasm. It carries out the reaction tRNA(Cys) + L-cysteine + ATP = L-cysteinyl-tRNA(Cys) + AMP + diphosphate. This is Cysteine--tRNA ligase from Bordetella avium (strain 197N).